The following is a 276-amino-acid chain: Putative translation initiation factor eIF-2B subunit 2-like (276 aa).

It belongs to the eIF-2B alpha/beta/delta subunits family. Complex of two different subunits.

In terms of biological role, catalyzes the exchange of initiation factor 2-bound GDP for GTP. In Pyrococcus furiosus (strain ATCC 43587 / DSM 3638 / JCM 8422 / Vc1), this protein is Putative translation initiation factor eIF-2B subunit 2-like.